We begin with the raw amino-acid sequence, 197 residues long: Transmembrane protein 126A (197 aa).

Residues 1-35 are Mitochondrial matrix-facing; the sequence is MENHEPDGTIIKENLTDIIARKINQLPEAERNLLE. The helical transmembrane segment at 36 to 56 threads the bilayer; that stretch reads NGSTYVGLNAALCGLIANSLF. Residues 57–58 lie on the Mitochondrial intermembrane side of the membrane; that stretch reads RR. Residues 59–79 form a helical membrane-spanning segment; that stretch reads ILHVTQARIAAGLPMAVIPFL. At 80–107 the chain is on the mitochondrial matrix side; that stretch reads TANVSYKGFVSLPLNTGDLQCETCTVTR. The chain crosses the membrane as a helical span at residues 108-128; that stretch reads GGLVGLVFGGLYPVFLAIPVN. Topologically, residues 129 to 160 are mitochondrial intermembrane; sequence GGLAARYNSALLPEKGNILNYWIRISKPVFRK. Residues 161–177 form a helical membrane-spanning segment; that stretch reads MLFPILLQTGFAAYLGS. Residues 178–197 lie on the Mitochondrial matrix side of the membrane; it reads RQYKLLIKALQLPEPGLEIE.

The protein belongs to the TMEM126 family. As to quaternary structure, interacts with OXA1L; promoting cotranslational quality control in mitochondria.

The protein resides in the mitochondrion inner membrane. In terms of biological role, protein required for the cotranslational protein quality control in the inner membrane of the mitochondria. Associates with newly synthesized polypeptides and may act as a chaperone that cooperates with OXA1L for the insertion of newly synthesized mitochondrial proteins into the inner membrane. Required for the assembly of the ND4 module of mitochondrial complex I. This chain is Transmembrane protein 126A (TMEM126A), found in Bos taurus (Bovine).